The primary structure comprises 227 residues: Orotidine 5'-phosphate decarboxylase (227 aa).

Substrate-binding positions include D8, K30, 59 to 68, T118, R178, Q187, G207, and R208; that span reads DLKLYDIPNT. Catalysis depends on K61, which acts as the Proton donor.

The protein belongs to the OMP decarboxylase family. Type 1 subfamily. Homodimer.

It catalyses the reaction orotidine 5'-phosphate + H(+) = UMP + CO2. The protein operates within pyrimidine metabolism; UMP biosynthesis via de novo pathway; UMP from orotate: step 2/2. Catalyzes the decarboxylation of orotidine 5'-monophosphate (OMP) to uridine 5'-monophosphate (UMP). The protein is Orotidine 5'-phosphate decarboxylase of Sulfurimonas denitrificans (strain ATCC 33889 / DSM 1251) (Thiomicrospira denitrificans (strain ATCC 33889 / DSM 1251)).